The primary structure comprises 56 residues: Large ribosomal subunit protein bL32 (56 aa).

Positions 1–26 (MAVQKSKVTRSRRGQRRSHDALTAAA) are disordered. The segment covering 7–16 (KVTRSRRGQR) has biased composition (basic residues).

Belongs to the bacterial ribosomal protein bL32 family.

In Moritella marina (Vibrio marinus), this protein is Large ribosomal subunit protein bL32 (rpmF).